We begin with the raw amino-acid sequence, 232 residues long: Ribose-5-phosphate isomerase A (232 aa).

Substrate-binding positions include 28–31, 83–86, and 96–99; these read TGST, DGAD, and KGGG. The active-site Proton acceptor is the glutamate 105. Lysine 123 serves as a coordination point for substrate.

This sequence belongs to the ribose 5-phosphate isomerase family. As to quaternary structure, homodimer.

The catalysed reaction is aldehydo-D-ribose 5-phosphate = D-ribulose 5-phosphate. It participates in carbohydrate degradation; pentose phosphate pathway; D-ribose 5-phosphate from D-ribulose 5-phosphate (non-oxidative stage): step 1/1. Its function is as follows. Catalyzes the reversible conversion of ribose-5-phosphate to ribulose 5-phosphate. This chain is Ribose-5-phosphate isomerase A, found in Allorhizobium ampelinum (strain ATCC BAA-846 / DSM 112012 / S4) (Agrobacterium vitis (strain S4)).